The sequence spans 41 residues: Photosystem I reaction center subunit IX (41 aa).

Residues 7 to 27 (YLSTAPVLTLVSLTAVAGLLI) traverse the membrane as a helical segment.

This sequence belongs to the PsaJ family.

It is found in the plastid. The protein localises to the chloroplast thylakoid membrane. Its function is as follows. May help in the organization of the PsaE and PsaF subunits. The protein is Photosystem I reaction center subunit IX of Chlorella vulgaris (Green alga).